We begin with the raw amino-acid sequence, 498 residues long: ATP synthase subunit beta, chloroplastic (498 aa).

172–179 (GGAGVGKT) contacts ATP.

It belongs to the ATPase alpha/beta chains family. In terms of assembly, F-type ATPases have 2 components, CF(1) - the catalytic core - and CF(0) - the membrane proton channel. CF(1) has five subunits: alpha(3), beta(3), gamma(1), delta(1), epsilon(1). CF(0) has four main subunits: a(1), b(1), b'(1) and c(9-12).

It localises to the plastid. The protein localises to the chloroplast thylakoid membrane. It carries out the reaction ATP + H2O + 4 H(+)(in) = ADP + phosphate + 5 H(+)(out). Produces ATP from ADP in the presence of a proton gradient across the membrane. The catalytic sites are hosted primarily by the beta subunits. This is ATP synthase subunit beta, chloroplastic from Illicium oligandrum (Star anise).